A 242-amino-acid chain; its full sequence is MRLDERHYDELRKIEIEAGYITHPEGSVLISAGNTKVICNASIEDRVPPFLRGEGKGWITAEYSMLPRATAQRTIRESSKGKVTGRTMEIQRLIGRALRAVVDLEKLGERTIWIDCDVIQADGGTRTASITGAFVAMTLAIQKLRAEGAIKQNPITDYLAAISVGIDSQQGLLLDLNYEEDSSAEVDMNVIMTGAGRFVELQGTGEEATFSREQLNGLLDLAEKGIKELIEKQKAVTGEVIE.

Phosphate contacts are provided by residues Arg86 and 124–126 (GTR).

The protein belongs to the RNase PH family. As to quaternary structure, homohexameric ring arranged as a trimer of dimers.

The catalysed reaction is tRNA(n+1) + phosphate = tRNA(n) + a ribonucleoside 5'-diphosphate. In terms of biological role, phosphorolytic 3'-5' exoribonuclease that plays an important role in tRNA 3'-end maturation. Removes nucleotide residues following the 3'-CCA terminus of tRNAs; can also add nucleotides to the ends of RNA molecules by using nucleoside diphosphates as substrates, but this may not be physiologically important. Probably plays a role in initiation of 16S rRNA degradation (leading to ribosome degradation) during starvation. The protein is Ribonuclease PH of Bacillus pumilus (strain SAFR-032).